A 256-amino-acid polypeptide reads, in one-letter code: tRNA pseudouridine synthase A (256 aa).

Asp-52 serves as the catalytic Nucleophile. Tyr-110 serves as a coordination point for substrate.

Belongs to the tRNA pseudouridine synthase TruA family. Homodimer.

The enzyme catalyses uridine(38/39/40) in tRNA = pseudouridine(38/39/40) in tRNA. Functionally, formation of pseudouridine at positions 38, 39 and 40 in the anticodon stem and loop of transfer RNAs. The protein is tRNA pseudouridine synthase A of Stenotrophomonas maltophilia (strain R551-3).